The following is a 460-amino-acid chain: Jacalin-related lectin 36 (460 aa).

The 131-residue stretch at 1 to 131 folds into the Jacalin-type lectin 1 domain; sequence MAAATMSWDD…LNSIDVHFAP (131 aa). Ala-2 carries the N-acetylalanine modification. 3 disordered regions span residues 34–57, 133–162, and 291–334; these read YDGD…VSLS, PSSS…WDDG, and SGRG…PHEG. Low complexity predominate over residues 133–143; sequence PSSSSSSSSLS. The Jacalin-type lectin 2 domain occupies 145 to 289; the sequence is ANKVDAQGGK…LNALGAYFAP (145 aa). Polar residues predominate over residues 292 to 309; the sequence is GRGTPSATQPPGSAQPTG. The region spanning 313-457 is the Jacalin-type lectin 3 domain; the sequence is AKKLEAKGGN…IHQVGVHVKP (145 aa).

The protein belongs to the jacalin lectin family.

The chain is Jacalin-related lectin 36 (JAL36) from Arabidopsis thaliana (Mouse-ear cress).